Reading from the N-terminus, the 248-residue chain is tRNA (guanine-N(1)-)-methyltransferase (248 aa).

S-adenosyl-L-methionine contacts are provided by residues glycine 117 and 137 to 142 (IGDFVL).

It belongs to the RNA methyltransferase TrmD family. In terms of assembly, homodimer.

It is found in the cytoplasm. The enzyme catalyses guanosine(37) in tRNA + S-adenosyl-L-methionine = N(1)-methylguanosine(37) in tRNA + S-adenosyl-L-homocysteine + H(+). Its function is as follows. Specifically methylates guanosine-37 in various tRNAs. In Polynucleobacter necessarius subsp. necessarius (strain STIR1), this protein is tRNA (guanine-N(1)-)-methyltransferase.